Here is a 118-residue protein sequence, read N- to C-terminus: Large ribosomal subunit protein bL20 (118 aa).

Belongs to the bacterial ribosomal protein bL20 family.

Its function is as follows. Binds directly to 23S ribosomal RNA and is necessary for the in vitro assembly process of the 50S ribosomal subunit. It is not involved in the protein synthesizing functions of that subunit. The polypeptide is Large ribosomal subunit protein bL20 (Serratia proteamaculans (strain 568)).